Reading from the N-terminus, the 276-residue chain is Large ribosomal subunit protein uL2 (276 aa).

The segment at 225–276 is disordered; it reads MNPNDHPHGGGEGRNPIGRNPVTPWGKPALGAKTRKKKHPSNRFIVKRRGKK. Positions 257 to 276 are enriched in basic residues; sequence KTRKKKHPSNRFIVKRRGKK.

Belongs to the universal ribosomal protein uL2 family. In terms of assembly, part of the 50S ribosomal subunit. Forms a bridge to the 30S subunit in the 70S ribosome.

In terms of biological role, one of the primary rRNA binding proteins. Required for association of the 30S and 50S subunits to form the 70S ribosome, for tRNA binding and peptide bond formation. It has been suggested to have peptidyltransferase activity; this is somewhat controversial. Makes several contacts with the 16S rRNA in the 70S ribosome. The sequence is that of Large ribosomal subunit protein uL2 from Desulfitobacterium hafniense (strain Y51).